Reading from the N-terminus, the 424-residue chain is GDP-fucose protein O-fucosyltransferase 2 (424 aa).

An N-terminal signal peptide occupies residues M1–A20. Position 51 to 55 (G51 to N55) interacts with GDP-beta-L-fucose. Catalysis depends on E52, which acts as the Proton acceptor. C154 and C187 form a disulfide bridge. N-linked (GlcNAc...) asparagine glycosylation is present at N205. Residues H288–R290, D366, and T383–F384 contribute to the GDP-beta-L-fucose site. A disulfide bridge connects residues C407 and C414.

It belongs to the glycosyltransferase 68 family. Expressed in the anterior part of embryos, in the hypodermal and neuronal cells of the head. Expressed at different levels in a variety of cell types after hatching, including neuronal, hypodermal, muscle, intestinal, and somatic gonadal cells. Expressed in the nerve ring around the pharynx, in dorsal and ventral nerve cords, intestine, and a variety of hypodermal cells of L1-L3 larvae. Expressed in gonadal sheath cells, spermatheca, and tissues surrounding the vulva of adult hermaphrodites, and in the body wall muscle and hypodermal cells of adults of both sexes.

The protein resides in the endoplasmic reticulum. Its subcellular location is the golgi apparatus. It catalyses the reaction L-seryl-[protein] + GDP-beta-L-fucose = 3-O-(alpha-L-fucosyl)-L-seryl-[protein] + GDP + H(+). The enzyme catalyses L-threonyl-[protein] + GDP-beta-L-fucose = 3-O-(alpha-L-fucosyl)-L-threonyl-[protein] + GDP + H(+). It functions in the pathway protein modification; protein glycosylation. Its function is as follows. Catalyzes the reaction that attaches fucose through an O-glycosidic linkage to a conserved serine or threonine residue in the consensus sequence C1-X-X-S/T-C2 of thrombospondin type I repeats (TSRs) where C1 and C2 are the first and second cysteines of the repeat, respectively. O-fucosylates members of several protein families including the ADAMTS superfamily and the thrombospondin (TSP) and spondin families. This is GDP-fucose protein O-fucosyltransferase 2 (pad-2) from Caenorhabditis elegans.